The primary structure comprises 273 residues: Formamidopyrimidine-DNA glycosylase (273 aa).

P2 acts as the Schiff-base intermediate with DNA in catalysis. Residue E3 is the Proton donor of the active site. K59 functions as the Proton donor; for beta-elimination activity in the catalytic mechanism. DNA is bound by residues H92 and R111. The FPG-type zinc-finger motif lies at 239–273; that stretch reads KVYGKTDEPCVVCGKPIEKIKLNGRGTHFCPNCQK. Catalysis depends on R263, which acts as the Proton donor; for delta-elimination activity.

The protein belongs to the FPG family. As to quaternary structure, monomer. It depends on Zn(2+) as a cofactor.

The enzyme catalyses Hydrolysis of DNA containing ring-opened 7-methylguanine residues, releasing 2,6-diamino-4-hydroxy-5-(N-methyl)formamidopyrimidine.. The catalysed reaction is 2'-deoxyribonucleotide-(2'-deoxyribose 5'-phosphate)-2'-deoxyribonucleotide-DNA = a 3'-end 2'-deoxyribonucleotide-(2,3-dehydro-2,3-deoxyribose 5'-phosphate)-DNA + a 5'-end 5'-phospho-2'-deoxyribonucleoside-DNA + H(+). Functionally, involved in base excision repair of DNA damaged by oxidation or by mutagenic agents. Acts as a DNA glycosylase that recognizes and removes damaged bases. Has a preference for oxidized purines, such as 7,8-dihydro-8-oxoguanine (8-oxoG). Has AP (apurinic/apyrimidinic) lyase activity and introduces nicks in the DNA strand. Cleaves the DNA backbone by beta-delta elimination to generate a single-strand break at the site of the removed base with both 3'- and 5'-phosphates. This is Formamidopyrimidine-DNA glycosylase from Listeria monocytogenes serotype 4b (strain F2365).